The primary structure comprises 275 residues: Phosphonoacetaldehyde hydrolase (275 aa).

D15 serves as the catalytic Nucleophile. Mg(2+) is bound by residues D15 and A17. Catalysis depends on K56, which acts as the Schiff-base intermediate with substrate. A Mg(2+)-binding site is contributed by D189.

Belongs to the HAD-like hydrolase superfamily. PhnX family. In terms of assembly, homodimer. Mg(2+) is required as a cofactor.

The enzyme catalyses phosphonoacetaldehyde + H2O = acetaldehyde + phosphate + H(+). Involved in phosphonate degradation. This Pseudomonas aeruginosa (strain UCBPP-PA14) protein is Phosphonoacetaldehyde hydrolase.